We begin with the raw amino-acid sequence, 81 residues long: Conotoxin Im016 (81 aa).

The N-terminal stretch at Met-1–Ala-21 is a signal peptide. Positions Asp-22–Arg-31 are excised as a propeptide.

It belongs to the conotoxin N superfamily. Contains 5 disulfide bonds. Expressed by the venom duct.

Its subcellular location is the secreted. Its function is as follows. Probable neurotoxin. The chain is Conotoxin Im016 from Conus imperialis (Imperial cone).